The chain runs to 304 residues: Tyrosine recombinase XerC (304 aa).

In terms of domain architecture, Core-binding (CB) spans 2–88; sequence ANVKNFLTLF…ALRSFYKFLL (87 aa). The 186-residue stretch at 109-294 folds into the Tyr recombinase domain; it reads RIPKFLYEKE…SKDMLRKTYM (186 aa). Residues Arg149, Lys173, His246, Arg249, and His272 contribute to the active site. Residue Tyr281 is the O-(3'-phospho-DNA)-tyrosine intermediate of the active site.

The protein belongs to the 'phage' integrase family. XerC subfamily. Forms a cyclic heterotetrameric complex composed of two molecules of XerC and two molecules of XerD.

Its subcellular location is the cytoplasm. In terms of biological role, site-specific tyrosine recombinase, which acts by catalyzing the cutting and rejoining of the recombining DNA molecules. The XerC-XerD complex is essential to convert dimers of the bacterial chromosome into monomers to permit their segregation at cell division. It also contributes to the segregational stability of plasmids. This chain is Tyrosine recombinase XerC, found in Bacillus licheniformis (strain ATCC 14580 / DSM 13 / JCM 2505 / CCUG 7422 / NBRC 12200 / NCIMB 9375 / NCTC 10341 / NRRL NRS-1264 / Gibson 46).